The following is a 1230-amino-acid chain: MASASYHISNLLEKMTSSDKDFRFMATNDLMTELQKDSIKLDDDSERKVVKMILKLLEDKNGEVQNLAVKCLGPLVSKVKEYQVETIVDTLCTNMLSDKEQLRDISSIGLKTVIGELPPASSGSALAANVCKKITGRLTSAIAKQEDVSVQLEALDIMADMLSRQGGLLVNFHPSILTCLLPQLTSPRLAVRKRTIIALGHLVMSCGNIVFVDLIEHLLSELSKNDSMSTTRTYIQCIAAISRQAGHRIGEYLEKIIPLVVKFCNVDDDELREYCIQAFESFVRRCPKEVYPHVSTIINICLKYLTYDPNYNYDDEDEDENAMDADGGDDDDQGSDDEYSDDDDMSWKVRRAAAKCLDAVVSTRHEMLPEFYKTVSPALISRFKEREENVKADVFHAYLSLLKQTRPVQSWLCDPDAMEQGETPLTMLQSQVPNIVKALHKQMKEKSVKTRQCCFNMLTELVNVLPGALTQHIPVLVPGIIFSLNDKSSSSNLKIDALSCLYVILCNHSPQVFHPHVQALVPPVVACVGDPFYKITSEALLVTQQLVKVIRPLDQPSSFDATPYIKDLFTCTIKRLKAADIDQEVKERAISCMGQIICNLGDNLGSDLPNTLQIFLERLKNEITRLTTVKALTLIAGSPLKIDLRPVLGEGVPILASFLRKNQRALKLGTLSALDILIKNYSDSLTAAMIDAVLDELPPLISESDMHVSQMAISFLTTLAKVYPSSLSKISGSILNELIGLVRSPLLQGGALSAMLDFFQALVVTGTNNLGYMDLLRMLTGPVYSQSTALTHKQSYYSIAKCVAALTRACPKEGPAVVGQFIQDVKNSRSTDSIRLLALLSLGEVGHHIDLSGQLELKSVILEAFSSPSEEVKSAASYALGSISVGNLPEYLPFVLQEITSQPKRQYLLLHSLKEIISSASVVGLKPYVENIWALLLKHCECAEEGTRNVVAECLGKLTLIDPETLLPRLKGYLISGSSYARSSVVTAVKFTISDHPQPIDPLLKNCIGDFLKTLEDPDLNVRRVALVTFNSAAHNKPSLIRDLLDTVLPHLYNETKVRKELIREVEMGPFKHTVDDGLDIRKAAFECMYTLLDSCLDRLDIFEFLNHVEDGLKDHYDIKMLTFLMLVRLSTLCPSAVLQRLDRLVEPLRATCTTKVKANSVKQEFEKQDELKRSAMRAVAALLTIPEAEKSPLMSEFQSQISSNPELAAIFESIQKDSSSTNLESMDTS.

A2 is modified (N-acetylalanine). HEAT repeat units follow at residues 2–39 (ASAS…KDSI), 44–81 (DSER…KVKE), 83–119 (QVET…ELPP), 131–165 (CKKI…LSRQ), 171–208 (NFHP…SCGN), 210–247 (VFVD…QAGH), 248–282 (RIGE…FESF), 289–366 (EVYP…TRHE), 370–407 (EFYK…QTRP), 424–467 (PLTM…VLPG), 471–510 (QHIP…NHSP), and 515–552 (PHVQ…VIRP). N6-acetyllysine is present on K55. A disordered region spans residues 315–344 (DEDEDENAMDADGGDDDDQGSDDEYSDDDD). S335 bears the Phosphoserine mark. Phosphoserine is present on S558. HEAT repeat units follow at residues 563-602 (PYIK…NLGD), 606-643 (SDLP…LKID), 646-683 (PVLG…NYSD), 688-725 (AMID…VYPS), 729-768 (KISG…TGTN), 770-808 (LGYM…ALTR), 809-845 (ACPK…LGEV), 852-889 (SGQL…GNLP), 890-927 (EYLP…GLKP), 928-960 (YVEN…KLTL), 961-998 (IDPE…DHPQ), 1002-1039 (PLLK…NKPS), 1043-1097 (DLLD…DSCL), 1099-1133 (RLDI…LSTL), and 1140-1189 (QRLD…IPEA). At K971 the chain carries N6-acetyllysine.

It belongs to the CAND family. In terms of assembly, interacts with TBP. Part of a complex that contains CUL1 and RBX1. Interacts with unneddylated cullins: interacts with CUL1, CUL2, CUL3, CUL4A, CUL4B and CUL5. Does not bind neddylated CUL1. Interaction with cullins is abolished in presence of COMMD1, which antagonizes with CAND1 for interacting with cullins. Interacts with ERCC6. Interacts with DCUN1D1, DCUN1D2, DCUN1D3, DCUN1D4 and DCUN1D5; these interactions are bridged by cullins and strongly inhibits the neddylation of cullins.

It localises to the cytoplasm. The protein resides in the nucleus. Functionally, key assembly factor of SCF (SKP1-CUL1-F-box protein) E3 ubiquitin ligase complexes that promotes the exchange of the substrate-recognition F-box subunit in SCF complexes, thereby playing a key role in the cellular repertoire of SCF complexes. Acts as a F-box protein exchange factor. The exchange activity of CAND1 is coupled with cycles of neddylation conjugation: in the deneddylated state, cullin-binding CAND1 binds CUL1-RBX1, increasing dissociation of the SCF complex and promoting exchange of the F-box protein. Probably plays a similar role in other cullin-RING E3 ubiquitin ligase complexes. The protein is Cullin-associated NEDD8-dissociated protein 1 (CAND1) of Bos taurus (Bovine).